The chain runs to 1057 residues: Protein transport protein Sec16B (1057 aa).

Polar residues predominate over residues 1–15 (MELWVPQTQGRTTGP). Positions 1–86 (MELWVPQTQG…VSGADYLKGS (86 aa)) are disordered. A compositionally biased stretch (basic and acidic residues) spans 45 to 63 (QDTHKNSKPQQDPRDDHQQ). 4 positions are modified to phosphoserine: Ser-70, Ser-137, Ser-161, and Ser-185. A disordered region spans residues 185 to 220 (SAFGLEQPGEFFPESGAQKQKPSLTSKSNLLQQHES). Residues 201–213 (AQKQKPSLTSKSN) are compositionally biased toward polar residues. A Phosphoserine modification is found at Ser-245. Residues 263–708 (APMRFYVPHV…KHKELEQTRT (446 aa)) are central conserved domain (CCD); required for localization to endoplasmic reticulum exit sites. Over residues 704-715 (EQTRTGDLRDPD) the composition is skewed to basic and acidic residues. Disordered regions lie at residues 704–778 (EQTR…TYSE) and 849–1057 (AVIS…SQPC). The span at 737–764 (GQQNYSEDSEYSSALWPTSEQTSLTNPT) shows a compositional bias: polar residues. At Thr-856 the chain carries Phosphothreonine. Phosphoserine is present on residues Ser-866, Ser-869, Ser-872, and Ser-881. The segment covering 883-903 (GADKPPHPDASQKEKLRDGKN) has biased composition (basic and acidic residues). A compositionally biased stretch (low complexity) spans 906–926 (SSGFGWFSWFRSKPASSVSTS). A compositionally biased stretch (acidic residues) spans 927-938 (GDEDSVDSSDSE). Positions 990–999 (EGVGIGGFSG) are enriched in gly residues. Polar residues predominate over residues 1028 to 1043 (NPSQVPQLPTASSLNR).

It belongs to the SEC16 family. SEC16A and SEC16B are each present in multiple copies in a heteromeric complex. Interacts with TFG. Interacts with SEC13. Liver, kidney, heart, spleen and brain.

It is found in the endoplasmic reticulum membrane. It localises to the golgi apparatus membrane. Its function is as follows. Plays a role in the organization of the endoplasmic reticulum exit sites (ERES), also known as transitional endoplasmic reticulum (tER). Required for secretory cargo traffic from the endoplasmic reticulum to the Golgi apparatus. Involved in peroxisome biogenesis. Regulates the transport of peroxisomal biogenesis factors PEX3 and PEX16 from the ER to peroxisomes. The protein is Protein transport protein Sec16B (Sec16b) of Rattus norvegicus (Rat).